Consider the following 3955-residue polypeptide: Nonribosomal peptide synthetase fmqA (3955 aa).

The adenylation 1 stretch occupies residues 293-691; that stretch reads SYSELETLSL…AQACCTIRNV (399 aa). The Carrier 1 domain occupies 806–879; sequence THKETLIHQL…DLARLTDVVN (74 aa). At Ser-840 the chain carries O-(pantetheine 4'-phosphoryl)serine. The tract at residues 916–1187 is condensation 1; the sequence is QDIYPCTPLQ…IATVPLRVRL (272 aa). Residues 1371–1766 are adenylation 2; it reads TYAELGELSD…DEVEKHVYQC (396 aa). The Carrier 2 domain occupies 1880–1956; sequence EPTSVAEREM…KIMSHESSLS (77 aa). The residue at position 1917 (Ser-1917) is an O-(pantetheine 4'-phosphoryl)serine. The tract at residues 1970–2261 is epimerase; sequence FALSPIQQMF…FTTMWPVVAE (292 aa). The condensation 2 stretch occupies residues 2438–2724; the sequence is EDIYPCSPSQ…FNPLPCRVHL (287 aa). The tract at residues 2906 to 3299 is adenylation 3; the sequence is TYGQLDELSS…GEVEANVQHC (394 aa). The region spanning 3422 to 3498 is the Carrier 3 domain; it reads APSTEEEKKL…DLAKVAVPKS (77 aa). Position 3459 is an O-(pantetheine 4'-phosphoryl)serine (Ser-3459). The tract at residues 3541–3805 is condensation 3; that stretch reads PGTQAQQFFI…CLNFIPLRVM (265 aa).

This sequence belongs to the NRP synthetase family. As to quaternary structure, interacts with the mitogen-activated protein kinase mpkA.

The protein localises to the cytoplasmic vesicle. It participates in alkaloid biosynthesis. Its function is as follows. Nonribosomal peptide synthetase; part of the gene cluster that mediates the biosynthesis of the antitumor fumiquinazolines that confer a dual-usage capability to defend against phagocytes in the environment and animal hosts. The simplest member is fumiquinazoline F (FQF) with a 6-6-6 tricyclic core derived from anthranilic acid (Ant), tryptophan (Trp), and alanine (Ala). The trimodular NRPS fmqA is responsible for FQF formation. Modules 1, 2 and 3 of fmqA are predicted to activate and load Ant, Trp and Ala, respectively, providing for the assembly of an Ant-Trp-Ala-S-enzyme intermediate that would undergo double cyclization for chain release and generation of the tricyclic 6-6-6 product fumiquinazoline F. The presence of an E domain predicted for module 2 of fmqA is consistent with epimerization of L-Trp to D-Trp during assembly to generate the R-stereocenter at C14 of FQF. The FAD-dependent monooxygenase fmqB and the monomodular NRPS fmqC then maturate FQF to FQA. FmqB oxidizes the 2',3'-double bond of the indole side chain of FQF, and fmqC activates L-Ala as the adenylate, installs it as the pantetheinyl thioester on its carrier protein domain, and acylates the oxidized indole for subsequent intramolecular cyclization to create the 6-5-5-imidazolindolone of FQA. The FAD-linked oxidoreductase fmqD introduces a third layer of scaffold complexity by converting FQA to the spirohemiaminal FQC, presumably by catalyzing the formation of a transient imine within the pyrazinone ring. FQC subsequently converts nonenzymatically to the known cyclic aminal FQD. This Aspergillus fumigatus (strain ATCC MYA-4609 / CBS 101355 / FGSC A1100 / Af293) (Neosartorya fumigata) protein is Nonribosomal peptide synthetase fmqA.